Consider the following 639-residue polypeptide: 1-deoxy-D-xylulose-5-phosphate synthase (639 aa).

Thiamine diphosphate-binding positions include His-79 and 120 to 122; that span reads GHS. Position 151 (Asp-151) interacts with Mg(2+). Thiamine diphosphate-binding positions include 152-153, Asn-180, Tyr-288, and Glu-370; that span reads GG. Asn-180 serves as a coordination point for Mg(2+).

Belongs to the transketolase family. DXPS subfamily. As to quaternary structure, homodimer. It depends on Mg(2+) as a cofactor. The cofactor is thiamine diphosphate.

It catalyses the reaction D-glyceraldehyde 3-phosphate + pyruvate + H(+) = 1-deoxy-D-xylulose 5-phosphate + CO2. Its pathway is metabolic intermediate biosynthesis; 1-deoxy-D-xylulose 5-phosphate biosynthesis; 1-deoxy-D-xylulose 5-phosphate from D-glyceraldehyde 3-phosphate and pyruvate: step 1/1. In terms of biological role, catalyzes the acyloin condensation reaction between C atoms 2 and 3 of pyruvate and glyceraldehyde 3-phosphate to yield 1-deoxy-D-xylulose-5-phosphate (DXP). The chain is 1-deoxy-D-xylulose-5-phosphate synthase from Methylococcus capsulatus (strain ATCC 33009 / NCIMB 11132 / Bath).